Reading from the N-terminus, the 206-residue chain is Glycerol-3-phosphate acyltransferase (206 aa).

5 consecutive transmembrane segments (helical) span residues 3-23 (LGWL…SYII), 51-71 (VGPA…AVVV), 83-103 (FAAA…YYGF), 113-133 (IGVL…IAIG), and 162-182 (WFGY…LSMW).

Belongs to the PlsY family. As to quaternary structure, probably interacts with PlsX.

The protein resides in the cell membrane. It catalyses the reaction an acyl phosphate + sn-glycerol 3-phosphate = a 1-acyl-sn-glycero-3-phosphate + phosphate. It functions in the pathway lipid metabolism; phospholipid metabolism. Its function is as follows. Catalyzes the transfer of an acyl group from acyl-phosphate (acyl-PO(4)) to glycerol-3-phosphate (G3P) to form lysophosphatidic acid (LPA). This enzyme utilizes acyl-phosphate as fatty acyl donor, but not acyl-CoA or acyl-ACP. This Halalkalibacterium halodurans (strain ATCC BAA-125 / DSM 18197 / FERM 7344 / JCM 9153 / C-125) (Bacillus halodurans) protein is Glycerol-3-phosphate acyltransferase.